The chain runs to 326 residues: MHRTTRIKITELNPHLMCVLCGGYFIDATTIIECLHSFCKTCIVRYLETSKYCPICDVQVHKTRPLLNIRADKTLQDIVYKLVPGLFKGEMKRRRDFYAAHPSADVANGSNEDRGEVADEDKRIITDDEIISLSIEFFDQNKADRKGSKDKDKEKSKDEINDKRYLRCPAALTIMHLRKFLRSKMDIPSNFQIDVMYEEEALKDYYTLMDIAYIYTWRRNGPLPLKYRVRPTCKRVKINPHTDRINHTSGDMESDSGSDKAGSLGVVIPSTSSCIPSPPVQSPHPHFPHISSTINGTSSSSSSHQNPFTNRARKISLNGVSAISSG.

The RING-type zinc finger occupies 18 to 57; the sequence is CVLCGGYFIDATTIIECLHSFCKTCIVRYLETSKYCPICD. The short motif at 81-95 is the Nuclear localization signal element; it reads KLVPGLFKGEMKRRR. Disordered stretches follow at residues 239–262 and 274–326; these read NPHTDRINHTSGDMESDSGSDKAG and CIPS…ISSG. Low complexity predominate over residues 290 to 303; it reads ISSTINGTSSSSSS.

As to quaternary structure, component of a PRC1-like complex. Interacts with cbx4.

It is found in the nucleus. Component of a Polycomb group (PcG) multiprotein PRC1-like complex, a complex class required to maintain the transcriptionally repressive state of many genes, including Hox genes, throughout development. PcG PRC1 complex acts via chromatin remodeling and modification of histones; it mediates monoubiquitination of histone H2A 'Lys-119', rendering chromatin heritably changed in its expressibility. In the PRC1 complex, it is required to stimulate the E3 ubiquitin-protein ligase activity of rnf2. This Xenopus laevis (African clawed frog) protein is Polycomb complex protein BMI-1-A (bmi1a).